A 247-amino-acid chain; its full sequence is ATP synthase subunit a, plastid (247 aa).

Transmembrane regions (helical) follow at residues 33–53, 95–115, 134–154, 199–219, and 220–240; these read FLVHGQVLITSWVVIAILLGS, VPFIGTMFLFIFVSNWSGALL, INTTVALALLTSAAYFYAGIL, LVVVVLVSLVPSVVPIPVMLL, and GLFTSGIQALIFATLAAAYIG.

The protein belongs to the ATPase A chain family. F-type ATPases have 2 components, CF(1) - the catalytic core - and CF(0) - the membrane proton channel. CF(1) has five subunits: alpha(3), beta(3), gamma(1), delta(1), epsilon(1). CF(0) has four main subunits: a, b, b' and c.

Its subcellular location is the plastid membrane. Functionally, key component of the proton channel; it plays a direct role in the translocation of protons across the membrane. The sequence is that of ATP synthase subunit a, plastid from Cuscuta exaltata (Tall dodder).